Reading from the N-terminus, the 284-residue chain is MYVVSTKQMLNNAQRGGYAVPAFNIHNLETMQVVVETAANLHAPVIIAGTPGTFTHAGTENLLALVSAMAKHYHHPLAIHLDHHTKFDDIAQKVRSGVRSVMIDASHLPFAQNISRVKEVVDFCHRFDVSVEAELGQLGGQEDDVQVNEADAFYTNPAQAREFAEATGIDSLAVAIGTAHGMYASAPALDFSRLENIRQWVNLPLVLHGASGLSTKDIQQTIKLGICKINVATELKNAFSQALKNYLTEHPEATDPRDYLQSAKSAMRDVVSKVIADCGCEGRA.

Residue aspartate 82 is the Proton donor of the active site. Zn(2+) contacts are provided by histidine 83 and histidine 180. A dihydroxyacetone phosphate-binding site is contributed by glycine 181. Histidine 208 lines the Zn(2+) pocket. Residues 209–211 and 230–233 contribute to the dihydroxyacetone phosphate site; these read GAS and NVAT.

Belongs to the class II fructose-bisphosphate aldolase family. TagBP aldolase GatY subfamily. As to quaternary structure, forms a complex with GatZ. It depends on Zn(2+) as a cofactor.

It carries out the reaction D-tagatofuranose 1,6-bisphosphate = D-glyceraldehyde 3-phosphate + dihydroxyacetone phosphate. The protein operates within carbohydrate metabolism; D-tagatose 6-phosphate degradation; D-glyceraldehyde 3-phosphate and glycerone phosphate from D-tagatose 6-phosphate: step 2/2. Catalytic subunit of the tagatose-1,6-bisphosphate aldolase GatYZ, which catalyzes the reversible aldol condensation of dihydroxyacetone phosphate (DHAP or glycerone-phosphate) with glyceraldehyde 3-phosphate (G3P) to produce tagatose 1,6-bisphosphate (TBP). Requires GatZ subunit for full activity and stability. Is involved in the catabolism of galactitol. The chain is D-tagatose-1,6-bisphosphate aldolase subunit GatY from Escherichia coli O157:H7.